The sequence spans 29 residues: Cycloviolacin-O21 (29 aa).

The segment at residues 1–29 is a cross-link (cyclopeptide (Gly-Asn)); that stretch reads GLPVCGETCVTGSCYTPGCTCSWPVCTRN. 3 disulfide bridges follow: C5/C19, C9/C21, and C14/C26.

This is a cyclic peptide. As to expression, expressed in leaves, petals, petioles, and runners but not in roots (at protein level).

Functionally, probably participates in a plant defense mechanism. In Viola odorata (Sweet violet), this protein is Cycloviolacin-O21.